Here is a 76-residue protein sequence, read N- to C-terminus: DNA-directed RNA polymerase subunit omega (76 aa).

The protein belongs to the RNA polymerase subunit omega family. As to quaternary structure, in cyanobacteria the RNAP catalytic core is composed of 2 alpha, 1 beta, 1 beta', 1 gamma and 1 omega subunit. When a sigma factor is associated with the core the holoenzyme is formed, which can initiate transcription.

The catalysed reaction is RNA(n) + a ribonucleoside 5'-triphosphate = RNA(n+1) + diphosphate. In terms of biological role, promotes RNA polymerase assembly. Latches the N- and C-terminal regions of the beta' subunit thereby facilitating its interaction with the beta and alpha subunits. The polypeptide is DNA-directed RNA polymerase subunit omega (Acaryochloris marina (strain MBIC 11017)).